The chain runs to 594 residues: Putative diflavin flavoprotein A 4 (594 aa).

Positions 57 to 250 are zinc metallo-hydrolase; it reads RRGTTSNSYL…LTLKMIAPGH (194 aa). The Flavodoxin-like domain maps to 279 to 417; the sequence is VALIYASAYG…VCTTSGANFA (139 aa). A flavodoxin-reductase-like region spans residues 445-594; the sequence is VGRIIGSIGV…IRHRKSGGQY (150 aa).

The protein in the N-terminal section; belongs to the zinc metallo-hydrolase group 3 family. This sequence in the C-terminal section; belongs to the flavodoxin reductase family. The cofactor is Fe cation.

In terms of biological role, mediates electron transfer from NADH to oxygen, reducing it to water. This modular protein has 3 redox cofactors, in other organisms the same activity requires 2 or 3 proteins. This is Putative diflavin flavoprotein A 4 (dfa4) from Synechocystis sp. (strain ATCC 27184 / PCC 6803 / Kazusa).